A 337-amino-acid polypeptide reads, in one-letter code: Annexin E1 (337 aa).

Annexin repeat units lie at residues 10–80 (TGVT…MLYK), 81–154 (PRAQ…AVAT), 161–238 (DTHE…LAHD), and 242–312 (DPCC…LLWE).

This sequence belongs to the annexin family.

It is found in the cell projection. It localises to the cilium. Its subcellular location is the flagellum. In terms of biological role, may function as a calcium-regulated structural element linking phospholipid bilayer and underlying axoneme. This is Annexin E1 (ANXE1) from Giardia intestinalis (Giardia lamblia).